Consider the following 65-residue polypeptide: Conotoxin TsMRCL-05 (65 aa).

A signal peptide spans 1 to 22; the sequence is MHCLPVLVILLLLIASTPSVDA. The propeptide occupies 23 to 52; the sequence is RPNPKDDVPLASFHGAVNAKRYLRTLWNSR. Residue Ile-64 is modified to Isoleucine amide.

The protein belongs to the conotoxin T superfamily. Post-translationally, contains 2 disulfide bonds that can be either 'C1-C3, C2-C4' or 'C1-C4, C2-C3', since these disulfide connectivities have been observed for conotoxins with cysteine framework V (for examples, see AC P0DQQ7 and AC P81755). As to expression, expressed by the venom duct.

The protein localises to the secreted. The protein is Conotoxin TsMRCL-05 of Conus tessulatus (Tessellate cone).